We begin with the raw amino-acid sequence, 428 residues long: Histone-lysine N-methyltransferase SMYD3 (428 aa).

An N-acetylmethionine modification is found at M1. Positions 4–240 (LKVEKFATAK…VGEELTICYL (237 aa)) constitute an SET domain. An S-adenosyl-L-methionine-binding site is contributed by 14-16 (RGN). T22 bears the Phosphothreonine mark. The Zn(2+) site is built by C49, C52, C62, C65, C71, C75, H83, and C87. The MYND-type zinc finger occupies 49-87 (CDRCLLGKEKLMRCSQCRVAKYCSAKCQKKAWPDHKREC). S-adenosyl-L-methionine is bound by residues Y124, N132, N181, 205–206 (NH), Y239, and F259. The interval 272-428 (DADMLTGDEQ…EECDANIRAS (157 aa)) is C-terminal domain; essential for histone methyltransferase activity, nuclear localization and mediates interaction with HSP90AA1.

Belongs to the class V-like SAM-binding methyltransferase superfamily. Histone-lysine methyltransferase family. As to quaternary structure, interacts with HSPCA. Interacts with HELZ. Interacts with POLR2A; the interaction may be indirect and may be mediated by HELZ. Interacts with HSP90AA1; this interaction enhances SMYD3 histone-lysine N-methyltransferase. Expressed in skeletal muscles and testis. Overexpressed in a majority of colorectal and hepatocellular carcinomas.

It is found in the cytoplasm. The protein resides in the nucleus. It carries out the reaction L-lysyl(4)-[histone H3] + 3 S-adenosyl-L-methionine = N(6),N(6),N(6)-trimethyl-L-lysyl(4)-[histone H3] + 3 S-adenosyl-L-homocysteine + 3 H(+). Its activity is regulated as follows. Histone methyltransferase activity strongly stimulated by HSPCA. In terms of biological role, histone methyltransferase. Specifically methylates 'Lys-4' of histone H3, inducing di- and tri-methylation, but not monomethylation. Also methylates 'Lys-5' of histone H4. Plays an important role in transcriptional activation as a member of an RNA polymerase complex. Binds DNA containing 5'-CCCTCC-3' or 5'-GAGGGG-3' sequences. This Homo sapiens (Human) protein is Histone-lysine N-methyltransferase SMYD3 (SMYD3).